The primary structure comprises 242 residues: ATP synthase subunit a (242 aa).

Helical transmembrane passes span 29–49 (SAAYMLLASVLALTYFYLAFS), 84–104 (FVPVIFTLFVFILFCNLFGMI), 114–134 (IIITFALAILVFLMVTIVGFV), 140–160 (FLSLFLPHGTPLWLAPLMIII), 189–209 (VIASFVITLMIYLKFLPIPLM), and 210–230 (VILIGFEIFVAILQAYIFTIL).

Belongs to the ATPase A chain family. As to quaternary structure, F-type ATPases have 2 components, CF(1) - the catalytic core - and CF(0) - the membrane proton channel. CF(1) has five subunits: alpha(3), beta(3), gamma(1), delta(1), epsilon(1). CF(0) has three main subunits: a(1), b(2) and c(9-12). The alpha and beta chains form an alternating ring which encloses part of the gamma chain. CF(1) is attached to CF(0) by a central stalk formed by the gamma and epsilon chains, while a peripheral stalk is formed by the delta and b chains.

Its subcellular location is the cell inner membrane. Its function is as follows. Key component of the proton channel; it plays a direct role in the translocation of protons across the membrane. This Rickettsia bellii (strain OSU 85-389) protein is ATP synthase subunit a.